The chain runs to 238 residues: Ureidoacrylate amidohydrolase RutB (238 aa).

The active-site Proton acceptor is aspartate 35. Lysine 144 is an active-site residue. Cysteine 177 acts as the Nucleophile in catalysis.

It belongs to the isochorismatase family. RutB subfamily.

The catalysed reaction is (Z)-3-ureidoacrylate + H2O + H(+) = (Z)-3-aminoacrylate + NH4(+) + CO2. The enzyme catalyses (Z)-3-ureidoacrylate + H2O = (Z)-3-aminoacrylate + carbamate + H(+). It carries out the reaction (Z)-2-methylureidoacrylate + H2O + H(+) = (Z)-2-methylaminoacrylate + NH4(+) + CO2. Functionally, hydrolyzes ureidoacrylate to form aminoacrylate and carbamate. The carbamate hydrolyzes spontaneously, thereby releasing one of the nitrogen atoms of the pyrimidine ring as ammonia and one of its carbon atoms as CO2. This chain is Ureidoacrylate amidohydrolase RutB, found in Caulobacter vibrioides (strain NA1000 / CB15N) (Caulobacter crescentus).